The following is a 582-amino-acid chain: Threonine--tRNA ligase (582 aa).

Residues 185–478 (DHRKLGKELE…LTEQYGGAFP (294 aa)) are catalytic. Zn(2+) is bound by residues Cys278, His329, and His455.

This sequence belongs to the class-II aminoacyl-tRNA synthetase family. Homodimer. Requires Zn(2+) as cofactor.

The protein localises to the cytoplasm. The enzyme catalyses tRNA(Thr) + L-threonine + ATP = L-threonyl-tRNA(Thr) + AMP + diphosphate + H(+). Catalyzes the attachment of threonine to tRNA(Thr) in a two-step reaction: L-threonine is first activated by ATP to form Thr-AMP and then transferred to the acceptor end of tRNA(Thr). Also edits incorrectly charged L-seryl-tRNA(Thr). This Dehalococcoides mccartyi (strain ATCC BAA-2100 / JCM 16839 / KCTC 5957 / BAV1) protein is Threonine--tRNA ligase.